A 55-amino-acid polypeptide reads, in one-letter code: Hirustasin (55 aa).

5 cysteine pairs are disulfide-bonded: C6–C17, C11–C22, C24–C44, C29–C48, and C33–C50. Residues 24–50 (CNEVHCRIRCKYGLKKDENGCEYPCSC) enclose the Antistasin-like domain.

It belongs to the protease inhibitor I15 (antistasin) family.

The protein localises to the secreted. Acts as an inhibitor of tissue kallikrein, trypsin, chymotrypsin and neutrophil cathepsin G. This chain is Hirustasin, found in Hirudo medicinalis (Medicinal leech).